Here is a 231-residue protein sequence, read N- to C-terminus: 2-C-methyl-D-erythritol 4-phosphate cytidylyltransferase (231 aa).

It belongs to the IspD/TarI cytidylyltransferase family. IspD subfamily.

It catalyses the reaction 2-C-methyl-D-erythritol 4-phosphate + CTP + H(+) = 4-CDP-2-C-methyl-D-erythritol + diphosphate. It functions in the pathway isoprenoid biosynthesis; isopentenyl diphosphate biosynthesis via DXP pathway; isopentenyl diphosphate from 1-deoxy-D-xylulose 5-phosphate: step 2/6. Catalyzes the formation of 4-diphosphocytidyl-2-C-methyl-D-erythritol from CTP and 2-C-methyl-D-erythritol 4-phosphate (MEP). In Xylella fastidiosa (strain M23), this protein is 2-C-methyl-D-erythritol 4-phosphate cytidylyltransferase.